Reading from the N-terminus, the 339-residue chain is Cathepsin L (339 aa).

An N-terminal signal peptide occupies residues 1-17 (MRTVLVALLALVALTQA). The propeptide at 18 to 121 (ISPLDLIKEE…ATYIPPAHVT (104 aa)) is activation peptide. Asn-96 is a glycosylation site (N-linked (GlcNAc...) asparagine). 3 disulfide bridges follow: Cys-143–Cys-186, Cys-177–Cys-219, and Cys-278–Cys-328. Cys-146 is a catalytic residue. Residue His-285 is part of the active site. The propeptide occupies 295 to 298 (DESG). Residue Asn-306 is part of the active site.

Belongs to the peptidase C1 family. Dimer of a heavy and a light chain linked by disulfide bonds.

The protein resides in the lysosome. It catalyses the reaction Specificity close to that of papain. As compared to cathepsin B, cathepsin L exhibits higher activity toward protein substrates, but has little activity on Z-Arg-Arg-NHMec, and no peptidyl-dipeptidase activity.. Its function is as follows. Important for the overall degradation of proteins in lysosomes. Required for differentiation of imaginal disks. The sequence is that of Cathepsin L from Sarcophaga peregrina (Flesh fly).